The sequence spans 438 residues: Thymidine phosphorylase (438 aa).

It belongs to the thymidine/pyrimidine-nucleoside phosphorylase family. In terms of assembly, homodimer.

The enzyme catalyses thymidine + phosphate = 2-deoxy-alpha-D-ribose 1-phosphate + thymine. It participates in pyrimidine metabolism; dTMP biosynthesis via salvage pathway; dTMP from thymine: step 1/2. In terms of biological role, the enzymes which catalyze the reversible phosphorolysis of pyrimidine nucleosides are involved in the degradation of these compounds and in their utilization as carbon and energy sources, or in the rescue of pyrimidine bases for nucleotide synthesis. This is Thymidine phosphorylase from Burkholderia orbicola (strain AU 1054).